Consider the following 572-residue polypeptide: Fusion glycoprotein F0 (572 aa).

The first 25 residues, 1-25, serve as a signal peptide directing secretion; it reads MATTTMRMIISIILISTYVPHITLC. Residues 26–522 are Extracellular-facing; that stretch reads QNITEEFYQS…SVDVGKSTTN (497 aa). N-linked (GlcNAc...) asparagine; by host glycans are attached at residues asparagine 27 and asparagine 70. Cystine bridges form between cysteine 37–cysteine 437, cysteine 69–cysteine 212, cysteine 311–cysteine 341, cysteine 320–cysteine 331, cysteine 356–cysteine 365, cysteine 380–cysteine 391, and cysteine 414–cysteine 420. Residues 76–96 are a coiled coil; the sequence is VKLIKQELERYNNAVAELQSL. An N-linked (GlcNAc...) asparagine; by host glycan is attached at asparagine 120. Residues 137–157 form a fusion peptide region; it reads FLGFLLGIGSAIASGVAVSKV. The stretch at 156-207 forms a coiled coil; it reads KVLHLEGEVNKIKNALLSTNKAVVSLSNGVSVLTSKVLDLKNYIDKELLPKV. Residues 479–514 adopt a coiled-coil conformation; sequence LVFPSDEFDASIAQVNAKINQSLAFIRRSDELLHSV. A glycan (N-linked (GlcNAc...) asparagine; by host) is linked at asparagine 498. The chain crosses the membrane as a helical span at residues 523 to 548; sequence VVITTIIIVIVVVILMLITVGLLFYC. Cysteine 548 carries S-palmitoyl cysteine; by host lipidation. At 549-572 the chain is on the cytoplasmic side; that stretch reads KTRSTPIMLGKDQLSSINNLSFSK.

The protein belongs to the paramyxoviruses fusion glycoprotein family. In terms of assembly, homotrimer. Heterodimer with fusion protein F2; disulfide-linked. Part of a complex composed of F1, F2 and G glycoproteins. As a heterodimer with F2, interacts with host RHOA; this interaction facilitates virus-induced syncytium formation. Homotrimer. Heterodimer with fusion protein F1; disulfide-linked. Part of a complex composed of F1, F2 and G glycoproteins. As a heterodimer with F1, interacts with host RHOA; this interaction facilitates virus-induced syncytium formation. In terms of processing, the F glycoprotein is synthesized as a F0 inactive precursor that is heavily N-glycosylated and processed at two sites by a host furin-like protease probably in the Golgi. The cleavage site between p27 and F1 may occur after endocytosis to yield the mature F1 and F2 proteins. Both cleavages are required for membrane fusion and p27 is released from the processed protein.

The protein localises to the host Golgi apparatus membrane. It localises to the virion membrane. It is found in the host cell membrane. Its function is as follows. Inactive precursor that is cleaved at two sites by a furin-like protease to give rise to the mature F1 and F2 fusion glycoproteins. In terms of biological role, class I viral fusion protein. Under the current model, the protein has at least 3 conformational states: pre-fusion native state, pre-hairpin intermediate state, and post-fusion hairpin state. During viral and plasma cell membrane fusion, the coiled coil regions assume a trimer-of-hairpins structure, positioning the fusion peptide in close proximity to the C-terminal region of the ectodomain. The formation of this structure appears to drive apposition and subsequent fusion of viral and cellular membranes leading to delivery of the nucleocapsid into the cytoplasm. This fusion is pH independent and occurs at the plasma or endosomal membrane. The trimer of F1-F2 (F protein) also facilitates the attachment and entry into the host cell. Later in infection, F protein expressed at the plasma membrane of infected cells can mediate fusion with adjacent cells to form syncytia, a cytopathic effect that could lead to tissue necrosis. Major determinant of the species specificity of RSV infection. The trimer of F1-F2 (F protein) also facilitates the attachment and entry into the host cell. Later in infection, F protein expressed at the plasma membrane of infected cells can mediate fusion with adjacent cells to form syncytia, a cytopathic effect that could lead to tissue necrosis. The sequence is that of Fusion glycoprotein F0 (F) from Bovine respiratory syncytial virus (strain A51908) (BRS).